Consider the following 794-residue polypeptide: Zinc finger protein 148 (794 aa).

Lys6 participates in a covalent cross-link: Glycyl lysine isopeptide (Lys-Gly) (interchain with G-Cter in SUMO2). Ser51 carries the phosphoserine modification. Residues Lys88, Lys115, and Lys132 each participate in a glycyl lysine isopeptide (Lys-Gly) (interchain with G-Cter in SUMO2) cross-link. The segment at 171–193 adopts a C2H2-type 1 zinc-finger fold; that stretch reads HVCEHCNAAFRTNYHLQRHVFIH. Thr194 bears the Phosphothreonine mark. 2 C2H2-type zinc fingers span residues 199–221 and 227–249; these read FQCSQCDMRFIQKYLLQRHEKIH and FRCDECGMRFIQKYHMERHKRTH. Ser250 carries the post-translational modification Phosphoserine. The segment at 255–278 adopts a C2H2-type 4 zinc-finger fold; sequence YQCEYCLQYFSRTDRVLKHKRMCH. Lys291 participates in a covalent cross-link: Glycyl lysine isopeptide (Lys-Gly) (interchain with G-Cter in SUMO2). The disordered stretch occupies residues 298–336; the sequence is EEDSGFSTSPKDNSLPKKKRQKTEKKSSGMDKESALDKS. Phosphoserine occurs at positions 301 and 306. Lys308 is covalently cross-linked (Glycyl lysine isopeptide (Lys-Gly) (interchain with G-Cter in SUMO2)). Positions 321-336 are enriched in basic and acidic residues; it reads EKKSSGMDKESALDKS. Lys356 is covalently cross-linked (Glycyl lysine isopeptide (Lys-Gly) (interchain with G-Cter in SUMO1); alternate). Residue Lys356 forms a Glycyl lysine isopeptide (Lys-Gly) (interchain with G-Cter in SUMO2); alternate linkage. Lys402 participates in a covalent cross-link: Glycyl lysine isopeptide (Lys-Gly) (interchain with G-Cter in SUMO2). Ser412 carries the post-translational modification Phosphoserine. Residues Lys421 and Lys424 each participate in a glycyl lysine isopeptide (Lys-Gly) (interchain with G-Cter in SUMO2) cross-link. Over residues 574–588 the composition is skewed to polar residues; it reads NSSEVPEVTPSENVG. Positions 574–599 are disordered; that stretch reads NSSEVPEVTPSENVGSSSQASSSDKA. Lys607 is modified (N6-acetyllysine). 2 positions are modified to phosphoserine: Ser665 and Ser784.

It belongs to the krueppel C2H2-type zinc-finger protein family. In terms of assembly, interacts with HNRNPDL. Interacts with the 5FMC complex; the interaction requires association with CHTOP. Interacts with CAVIN1. In terms of processing, sumoylated with SUMO2. Desumoylated by SENP3, resulting in the stimulation of transcription of its target genes.

It is found in the nucleus. Its function is as follows. Involved in transcriptional regulation. Represses the transcription of a number of genes including gastrin, stromelysin and enolase. Binds to the G-rich box in the enhancer region of these genes. The protein is Zinc finger protein 148 (ZNF148) of Pongo abelii (Sumatran orangutan).